The following is a 997-amino-acid chain: FHIP family protein CPIJ015043 (997 aa).

2 disordered regions span residues 558–579 and 759–922; these read DHRSSQCQSPAQQHLHQQQQLQ and NVVL…GGAA. Residues 569 to 579 show a composition bias toward low complexity; it reads QQHLHQQQQLQ. The segment covering 763–780 has biased composition (gly residues); that stretch reads GGSGPGGPRLSNGGGGTG. Low complexity-rich tracts occupy residues 781 to 792 and 830 to 889; these read SSITSSLSQTTP and GSNS…MVGS. Over residues 911 to 922 the composition is skewed to gly residues; it reads IGSGTVGGGGAA.

This sequence belongs to the FHIP family.

The protein is FHIP family protein CPIJ015043 of Culex quinquefasciatus (Southern house mosquito).